Here is a 912-residue protein sequence, read N- to C-terminus: Androgen receptor (912 aa).

The tract at residues 1-550 (MEVQLGLGRV…PIDYYFPPQK (550 aa)) is modulating. The interval 1–579 (MEVQLGLGRV…GSCKVFFKRA (579 aa)) is interaction with ZNF318. 2 disordered regions span residues 35-156 (QNPG…GPTF) and 204-236 (QQQQ…YLGG). A Phosphoserine; by CDK9 modification is found at Ser-69. At Ser-82 the chain carries Phosphoserine. The segment covering 204–213 (QQQQEVVSEG) has biased composition (low complexity). Residues 226–236 (PTSSKDSYLGG) show a composition bias toward polar residues. Position 233 is a phosphotyrosine; by CSK (Tyr-233). Ser-266 is subject to Phosphoserine. Position 277 is a phosphotyrosine; by CSK and TNK2 (Tyr-277). A phosphotyrosine; by CSK mark is found at Tyr-315, Tyr-354, Tyr-365, and Tyr-370. Tyr-371 is modified (phosphotyrosine; by CSK and TNK2). The tract at residues 375–394 (LSLAGPPPPPPSPHPHARIK) is disordered. The segment covering 379–388 (GPPPPPPSPH) has biased composition (pro residues). Lys-394 participates in a covalent cross-link: Glycyl lysine isopeptide (Lys-Gly) (interchain with G-Cter in SUMO). Residue Tyr-401 is modified to Phosphotyrosine; by CSK. A disordered region spans residues 452–490 (LYGPCGGSGGGGTGESVSVTPYGYTRPQQGLTGQEGDFP). Positions 455–465 (PCGGSGGGGTG) are enriched in gly residues. Lys-513 is covalently cross-linked (Glycyl lysine isopeptide (Lys-Gly) (interchain with G-Cter in SUMO)). A phosphotyrosine; by CSK mark is found at Tyr-527 and Tyr-544. The segment at 544–911 (YYFPPQKTCL…GKVKPIYFHT (368 aa)) is interaction with LPXN. The segment at residues 551-624 (TCLICGDEAS…AGMTLGARRL (74 aa)) is a DNA-binding region (nuclear receptor). 2 NR C4-type zinc fingers span residues 552–572 (CLIC…CGSC) and 588–612 (CASR…LRKC). The segment at 564 to 654 (YGALTCGSCK…TEETTQKLTV (91 aa)) is interaction with HIPK3. The tract at residues 584-911 (QKYLCASRND…GKVKPIYFHT (328 aa)) is interaction with CCAR1. Residues 617–911 (MTLGARRLKK…GKVKPIYFHT (295 aa)) form an interaction with KAT7 region. Ser-643 carries the phosphoserine; by STK4/MST1 modification. Positions 661–892 (ECQPIFLNVL…DFPEMMAEII (232 aa)) constitute an NR LBD domain. 17beta-hydroxy-5alpha-androstan-3-one is bound by residues Asn-698 and Arg-745. Glycyl lysine isopeptide (Lys-Gly) (interchain with G-Cter in ubiquitin) cross-links involve residues Lys-838 and Lys-840. Thr-870 contributes to the 17beta-hydroxy-5alpha-androstan-3-one binding site. Position 908 is a phosphotyrosine; by CSK (Tyr-908).

The protein belongs to the nuclear hormone receptor family. NR3 subfamily. In terms of assembly, binds DNA as a homodimer. Part of a ternary complex containing AR, EFCAB6/DJBP and PARK7. Interacts with HIPK3 and NR0B2 in the presence of androgen. The ligand binding domain interacts with KAT7/HBO1 in the presence of dihydrotestosterone. Interacts with EFCAB6/DJBP, PQBP1, RANBP9, RBAK, SPDEF, SRA1, TGFB1I1 and RREB1. Interacts with ZMIZ1/ZIMP10 and ZMIZ2/ZMIP7 which both enhance its transactivation activity. Interacts with SLC30A9 and RAD54L2/ARIP4. Interacts with MACROD1 (via macro domain). Interacts via the ligand-binding domain with LXXLL and FXXLF motifs from NCOA1, NCOA2, NCOA3 and MAGEA11. Interacts (via nuclear receptor DNA binding domain and nuclear receptor ligand binding domain) with NCOA4. The AR N-terminal poly-Gln region binds Ran resulting in enhancement of AR-mediated transactivation. Ran-binding decreases as the poly-Gln length increases. Interacts with HIP1 (via coiled coil domain). Interacts (via ligand-binding domain) with TRIM68. Interacts with TNK2. Interacts with USP26. Interacts with RNF6. Interacts (regulated by RNF6 probably through polyubiquitination) with RNF14; regulates AR transcriptional activity. Interacts with PRMT2 and TRIM24. Interacts with RACK1. Interacts with RANBP10; this interaction enhances dihydrotestosterone-induced AR transcriptional activity. Interacts with PRPF6 in a hormone-independent way; this interaction enhances dihydrotestosterone-induced AR transcriptional activity. Interacts with STK4/MST1. Interacts with ZIPK/DAPK3. Interacts with LPXN. Interacts with MAK. Part of a complex containing AR, MAK and NCOA3. Interacts with CRY1. Interacts with CCAR1 and GATA2. Interacts with ZNF318. Interacts with BUD31. Interacts with ARID4A. Interacts with ARID4B. Interacts (via NR LBD domain) with ZBTB7A; the interaction is direct and androgen-dependent. Interacts with NCOR1. Interacts with NCOR2. Interacts with CRY2 in a ligand-dependent manner. Post-translationally, phosphorylation by TNK2 enhances the DNA-binding and transcriptional activity. Phosphorylation at Ser-69 by CDK9 regulates AR promoter selectivity and cell growth. Sumoylated on Lys-394 (major) and Lys-513. Ubiquitinated. Deubiquitinated by USP26. 'Lys-6' and 'Lys-27'-linked polyubiquitination by RNF6 modulates AR transcriptional activity and specificity. In terms of processing, palmitoylated by ZDHHC7 and ZDHHC21. Palmitoylation is required for plasma membrane targeting and for rapid intracellular signaling via ERK and AKT kinases and cAMP generation.

It is found in the nucleus. The protein localises to the cytoplasm. Its function is as follows. Steroid hormone receptors are ligand-activated transcription factors that regulate eukaryotic gene expression and affect cellular proliferation and differentiation in target tissues. Transcription factor activity is modulated by bound coactivator and corepressor proteins like ZBTB7A that recruits NCOR1 and NCOR2 to the androgen response elements/ARE on target genes, negatively regulating androgen receptor signaling and androgen-induced cell proliferation. Transcription activation is also down-regulated by NR0B2. Activated, but not phosphorylated, by HIPK3 and ZIPK/DAPK3. The chain is Androgen receptor (AR) from Crocuta crocuta (Spotted hyena).